A 302-amino-acid chain; its full sequence is Proline dehydrogenase 1 (302 aa).

Lys-95 is a substrate binding site. Asp-129 is an active-site residue. FAD-binding residues include Met-130 and Gln-158. Arg-179 is a catalytic residue. FAD is bound by residues 182-184 and 221-222; these read KGA and TH. 283-284 contributes to the substrate binding site; sequence RR.

This sequence belongs to the proline dehydrogenase family. Requires FAD as cofactor.

The catalysed reaction is L-proline + a quinone = (S)-1-pyrroline-5-carboxylate + a quinol + H(+). Its pathway is amino-acid degradation; L-proline degradation into L-glutamate; L-glutamate from L-proline: step 1/2. Converts proline to delta-1-pyrroline-5-carboxylate. The sequence is that of Proline dehydrogenase 1 (fadM) from Bacillus subtilis (strain 168).